The sequence spans 317 residues: SVP1-like protein 2 (317 aa).

WD repeat units lie at residues 119–159 (AHST…KMAE) and 164–203 (VDHA…NAPY).

This sequence belongs to the WD repeat PROPPIN family.

It is found in the vacuole membrane. The protein resides in the cytoplasmic vesicle membrane. Its function is as follows. Involved in mitochondrial or peroxisomal functions and amino acid signaling pathways. This chain is SVP1-like protein 2 (hsv2), found in Emericella nidulans (strain FGSC A4 / ATCC 38163 / CBS 112.46 / NRRL 194 / M139) (Aspergillus nidulans).